A 31-amino-acid polypeptide reads, in one-letter code: Cyclotide vibi-F (31 aa).

The segment at residues 1-31 (GTIPCGESCVFIPCLTSALGCSCKSKVCYKN) is a cross-link (cyclopeptide (Gly-Asn)). 3 disulfides stabilise this stretch: C5–C21, C9–C23, and C14–C28.

This is a cyclic peptide.

In terms of biological role, probably participates in a plant defense mechanism. The protein is Cyclotide vibi-F of Viola biflora (Yellow wood violet).